Here is a 325-residue protein sequence, read N- to C-terminus: Ubiquitin thioesterase OTU1 (325 aa).

The UBX-like stretch occupies residues 7–86; it reads RIRSKTGVEN…NVSSISSNPG (80 aa). In terms of domain architecture, OTU spans 123–246; it reads ATRRVTDDDN…GIHYDALSIC (124 aa). The tract at residues 128–134 is cys-loop; it reads TDDDNSC. The active site involves aspartate 131. Cysteine 134 functions as the Nucleophile in the catalytic mechanism. The interval 185–195 is variable-loop; that stretch reads IQNPKNWGGAI. The interval 235-239 is his-loop; the sequence is YDGIH. Isoleucine 238 serves as a coordination point for substrate. The active site involves histidine 239. The interval 265-270 is S2 site; the sequence is KDSLAK. The C2H2-type zinc-finger motif lies at 292 to 316; sequence LICLNCNKTLKGEKEAAIHASTTGH. Histidine 316 is a catalytic residue.

The protein resides in the cytoplasm. The enzyme catalyses Thiol-dependent hydrolysis of ester, thioester, amide, peptide and isopeptide bonds formed by the C-terminal Gly of ubiquitin (a 76-residue protein attached to proteins as an intracellular targeting signal).. Its function is as follows. Hydrolase that can remove conjugated ubiquitin from proteins and may therefore play an important regulatory role at the level of protein turnover by preventing degradation. This Dictyostelium discoideum (Social amoeba) protein is Ubiquitin thioesterase OTU1 (yod1).